The primary structure comprises 104 residues: Large ribosomal subunit protein uL24 (104 aa).

This sequence belongs to the universal ribosomal protein uL24 family. In terms of assembly, part of the 50S ribosomal subunit.

One of two assembly initiator proteins, it binds directly to the 5'-end of the 23S rRNA, where it nucleates assembly of the 50S subunit. In terms of biological role, one of the proteins that surrounds the polypeptide exit tunnel on the outside of the subunit. The protein is Large ribosomal subunit protein uL24 of Alteromonas mediterranea (strain DSM 17117 / CIP 110805 / LMG 28347 / Deep ecotype).